The sequence spans 583 residues: Alpha-1,3-arabinosyltransferase XAT2 (583 aa).

Over 1–21 (MKPVERAKLVRSLRQESRRLR) the chain is Cytoplasmic. A helical; Signal-anchor for type II membrane protein membrane pass occupies residues 22-42 (LLVLVIGFFLVTLTFVVISKP). Topologically, residues 43–583 (DALLFNLNGR…LLEVLDQLNQ (541 aa)) are lumenal. Positions 73-178 (RRSADTFPAA…NGKQEDGKPN (106 aa)) are disordered. Basic and acidic residues-rich tracts occupy residues 102–121 (TSEE…KNEE) and 135–146 (EDNKNGEEEGHT). A compositionally biased stretch (polar residues) spans 149–160 (SKVTLPTVSNYT). Asn158 carries an N-linked (GlcNAc...) asparagine glycan. A compositionally biased stretch (basic and acidic residues) spans 162–178 (RDAEDTDNGKQEDGKPN). Residues Asn229, Asn382, Asn450, and Asn485 are each glycosylated (N-linked (GlcNAc...) asparagine).

The protein belongs to the glycosyltransferase 61 family.

The protein resides in the golgi apparatus membrane. It participates in glycan metabolism. Glycosyltransferase involved in the arabinosylation of xylan, the major hemicellulose (non-cellulosic component) of primary and secondary walls of angiosperms. Possesses alpha-1,3-arabinosyltransferase activity, transferring an arabinofuranose residue to the xylan backbone. In Oryza sativa subsp. japonica (Rice), this protein is Alpha-1,3-arabinosyltransferase XAT2.